We begin with the raw amino-acid sequence, 571 residues long: Glutamate--tRNA ligase (571 aa).

Positions 110-120 match the 'HIGH' region motif; it reads PNPNGPATLGS.

Belongs to the class-I aminoacyl-tRNA synthetase family. Glutamate--tRNA ligase type 2 subfamily.

Its subcellular location is the cytoplasm. The catalysed reaction is tRNA(Glu) + L-glutamate + ATP = L-glutamyl-tRNA(Glu) + AMP + diphosphate. Catalyzes the attachment of glutamate to tRNA(Glu) in a two-step reaction: glutamate is first activated by ATP to form Glu-AMP and then transferred to the acceptor end of tRNA(Glu). In Methanosarcina barkeri (strain Fusaro / DSM 804), this protein is Glutamate--tRNA ligase.